We begin with the raw amino-acid sequence, 207 residues long: Nuclear transcription factor Y subunit beta (207 aa).

An a domain region spans residues 1-52 (MTMDGDSSTTDASQLGISADYIGGSHYVIQPHDDTEDSMNDHEDTNGSKESF). The disordered stretch occupies residues 27–52 (YVIQPHDDTEDSMNDHEDTNGSKESF). Residues 39-52 (MNDHEDTNGSKESF) are compositionally biased toward basic and acidic residues. Residues 53–142 (REQDIYLPIA…PLKLYLQKFR (90 aa)) form a b domain region. Residues 59-65 (LPIANVA) mediate DNA binding. Residues 86 to 97 (VQECVSEFISFI) are subunit association domain (SAD). A Glycyl lysine isopeptide (Lys-Gly) (interchain with G-Cter in ubiquitin) cross-link involves residue Lys140. Positions 143 to 207 (EAMKGEKGIG…ISGVQQIQFS (65 aa)) are c domain.

The protein belongs to the NFYB/HAP3 subunit family. As to quaternary structure, heterotrimeric transcription factor composed of three components, NF-YA, NF-YB and NF-YC. NF-YB and NF-YC must interact and dimerize for NF-YA association and DNA binding. Interacts with C1QBP. Post-translationally, monoubiquitination at Lys-140 plays an important role in transcriptional activation by allowing the deposition of histone H3 methylations as well as histone H2B monoubiquitination at 'Lys-121'.

It is found in the nucleus. Its function is as follows. Component of the sequence-specific heterotrimeric transcription factor (NF-Y) which specifically recognizes a 5'-CCAAT-3' box motif found in the promoters of its target genes. NF-Y can function as both an activator and a repressor, depending on its interacting cofactors. The sequence is that of Nuclear transcription factor Y subunit beta (NFYB) from Homo sapiens (Human).